Here is a 648-residue protein sequence, read N- to C-terminus: Biosynthetic arginine decarboxylase (648 aa).

Position 109 is an N6-(pyridoxal phosphate)lysine (lysine 109). Substrate is bound at residue 291-301; it reads IDVGGGLGIDF.

It belongs to the Orn/Lys/Arg decarboxylase class-II family. SpeA subfamily. It depends on Mg(2+) as a cofactor. Requires pyridoxal 5'-phosphate as cofactor.

It catalyses the reaction L-arginine + H(+) = agmatine + CO2. The protein operates within amine and polyamine biosynthesis; agmatine biosynthesis; agmatine from L-arginine: step 1/1. Its function is as follows. Catalyzes the biosynthesis of agmatine from arginine. The sequence is that of Biosynthetic arginine decarboxylase from Prochlorococcus marinus (strain AS9601).